A 708-amino-acid polypeptide reads, in one-letter code: Soluble guanylate cyclase gcy-37 (708 aa).

A heme-binding site is contributed by histidine 105. Positions 368-409 form a coiled coil; it reads LNQSRICQMELNKKLEETMKKMKKMTEELEVKKSQTDRLLFE. The Guanylate cyclase domain occupies 434–562; sequence SVIFTDIPDF…NTVNVTKSIC (129 aa). 2 residues coordinate Mg(2+): aspartate 439 and aspartate 483.

The protein belongs to the adenylyl cyclase class-4/guanylyl cyclase family. As to quaternary structure, heterodimer; with other soluble guanylate cyclases. Heme is required as a cofactor. As to expression, expressed in a small number of neurons, corresponding to URX, AQR and PQR neurons.

Its subcellular location is the cytoplasm. The catalysed reaction is GTP = 3',5'-cyclic GMP + diphosphate. May be regulated by molecular oxygen. Probably not activated by nitric oxide (NO). Functionally, synthesizes cyclic GMP (cGMP) from GTP. May play a role in sensory neurons. The polypeptide is Soluble guanylate cyclase gcy-37 (gcy-37) (Caenorhabditis elegans).